Consider the following 89-residue polypeptide: MKTLLLILGVVAFVYLEPGYTTNCFTCTTWTLSCREFEKCPPDKGTCFKRWNSTGIAIRRRYTRGCAAACPNPVGNEKVFCCVTDNCNK.

The first 16 residues, 1-16, serve as a signal peptide directing secretion; it reads MKTLLLILGVVAFVYL. 4 disulfide bridges follow: C24–C47, C40–C66, C70–C81, and C82–C87.

Belongs to the three-finger toxin family. Ancestral subfamily. Expressed by the venom gland.

It localises to the secreted. The chain is Three-finger toxin 3 from Sistrurus catenatus edwardsii (Desert massasauga).